A 150-amino-acid chain; its full sequence is Cdc42 effector protein 5 (150 aa).

Disordered stretches follow at residues 1–20, 34–89, and 114–133; these read MPVMKQLGPAQPKKRLDRGA, LHVG…PADP, and SETTATKPDGDAHPRVQHPK. One can recognise a CRIB domain in the interval 23–37; the sequence is ISAPLGDFRHTLHVG. R38 carries the omega-N-methylarginine modification. Composition is skewed to pro residues over residues 55 to 66 and 74 to 87; these read GPPPEPGAPPVV and PAAPQPPVAVPSPA. The segment covering 114–127 has biased composition (basic and acidic residues); the sequence is SETTATKPDGDAHP.

This sequence belongs to the BORG/CEP family. Interacts with CDC42 in a GTP-dependent manner, and with SEPT7. In terms of tissue distribution, highly expressed in the skeletal muscle.

The protein localises to the endomembrane system. The protein resides in the cytoplasm. It is found in the cytoskeleton. Probably involved in the organization of the actin cytoskeleton. May act downstream of CDC42 to induce actin filament assembly leading to cell shape changes. Induces pseudopodia formation in fibroblasts. Inhibits MAPK8 independently of CDC42 binding. Controls septin organization and this effect is negatively regulated by CDC42. In Mus musculus (Mouse), this protein is Cdc42 effector protein 5 (Cdc42ep5).